The primary structure comprises 402 residues: Deacetylase Oant_2987 (402 aa).

Positions 70, 72, 168, 201, 224, and 284 each coordinate Zn(2+). Lys168 is modified (N6-carboxylysine).

It belongs to the metallo-dependent hydrolases superfamily. Atu3266/EF_0837 deacetylase family. Zn(2+) is required as a cofactor.

Its function is as follows. Esterase that catalyzes the deacetylation of acetyl-(R)-mandelate (in vitro). Can also hydrolyze acetyl glycolate, but with lower efficiency. Has very low N-acetyl-D-amino acid deacetylase activity with N-acetyl-D-serine and N-acetyl-D-threonine (in vitro). Theoretical substrate docking studies suggest that other N-acetylated amino acids may optimally occupy the active site and may in fact be the physiological substrates. The chain is Deacetylase Oant_2987 from Brucella anthropi (strain ATCC 49188 / DSM 6882 / CCUG 24695 / JCM 21032 / LMG 3331 / NBRC 15819 / NCTC 12168 / Alc 37) (Ochrobactrum anthropi).